We begin with the raw amino-acid sequence, 29 residues long: TPEHQRYIELFLVVDSGMFMKYNGNSDKI.

The Peptidase M12B domain occupies 6–29 (RYIELFLVVDSGMFMKYNGNSDKI). E9 is a binding site for Ca(2+).

The protein belongs to the venom metalloproteinase (M12B) family. Zn(2+) is required as a cofactor. In terms of tissue distribution, expressed by the venom gland.

It is found in the secreted. The enzyme catalyses Cleavage of 4-Gln-|-His-5, 9-Ser-|-His-10 and 14-Ala-|-Leu-15 of insulin B chain and Pro-|-Phe of angiotensin I.. Snake venom zinc metalloproteinase that impairs hemostasis in the envenomed animal. This chain is Snake venom metalloproteinase bothrolysin, found in Bothrops jararaca (Jararaca).